The following is a 955-amino-acid chain: Calsyntenin-2 (955 aa).

The first 20 residues, 1–20 (MLPGRLCWVPLLLALGVGSG), serve as a signal peptide directing secretion. At 21-831 (SGGGGDSRQR…SIQHSSVVPS (811 aa)) the chain is on the extracellular side. Cadherin domains are found at residues 44 to 160 (IETS…APTF) and 161 to 280 (KEPA…MPLF). Asparagine 56 and asparagine 98 each carry an N-linked (GlcNAc...) asparagine glycan. N-linked (GlcNAc...) asparagine glycans are attached at residues asparagine 342, asparagine 374, asparagine 716, and asparagine 729. The helical transmembrane segment at 832-852 (IATVVIIISVCMLVFVVAMGV) threads the bilayer. At 853 to 955 (YRVRIAHQHF…LEWDDSTLPY (103 aa)) the chain is on the cytoplasmic side. Residues 887–955 (PMEKHEGPGH…LEWDDSTLPY (69 aa)) are disordered. The segment covering 888 to 898 (MEKHEGPGHGE) has biased composition (basic and acidic residues). 2 stretches are compositionally biased toward acidic residues: residues 899–913 (DETE…EEEM) and 920–929 (DDSEEEEEEE).

This sequence belongs to the calsyntenin family. In terms of processing, proteolytically processed under normal cellular conditions. A primary zeta-cleavage generates a large extracellular (soluble) N-terminal domain (sAlc) and a short C-terminal transmembrane fragment (CTF1). A secondary cleavage catalyzed by gamma-secretase within the transmembrane domain releases the beta-Alc-gamma chain in the extracellular milieu and produces an intracellular fragment (AlcICD). This processing is strongly suppressed in the tripartite complex formed with APBA2 and APP, which seems to prevent the association with PSEN1. Restricted to the brain.

Its subcellular location is the postsynaptic cell membrane. The protein localises to the endoplasmic reticulum membrane. It is found in the golgi apparatus membrane. It localises to the cell projection. The protein resides in the dendrite. In terms of biological role, postsynaptic adhesion molecule that binds to presynaptic neurexins to mediate synapse formation, and which is involved in learning and memory. Promotes synapse development by acting as a cell adhesion molecule at the postsynaptic membrane, which associates with neurexin-alpha at the presynaptic membrane. The chain is Calsyntenin-2 from Homo sapiens (Human).